A 393-amino-acid polypeptide reads, in one-letter code: Na(+)/H(+) antiporter NhaA (393 aa).

12 helical membrane-spanning segments follow: residues 23-43 (AGGITLMAAAALALIVANSPF), 58-78 (LSLAHWINDALMAKFFLLVGL), 96-116 (MLPGIAAAGGVILPAIIFAVL), 126-146 (GWAVPSATDIAFALGVLSLLG), 155-175 (VFLATLAILDDLAAVVIIAIF), 178-198 (AEISMPYLGAAFITAAVLFVM), 201-221 (MGVVKLLPYLISAVILWFFVF), 224-244 (GVHATVAGVVAALMIPLKPAP), 265-285 (VAFIVVPIFGFANAGISFKGL), 298-318 (ILLGLFLGKQFGVFGAAWLAI), 334-354 (LYGVAILCGIGFTMSIFIGLL), and 367-387 (IGVLSGSALSAICGYLLLRAA).

This sequence belongs to the NhaA Na(+)/H(+) (TC 2.A.33) antiporter family.

The protein resides in the cell inner membrane. It carries out the reaction Na(+)(in) + 2 H(+)(out) = Na(+)(out) + 2 H(+)(in). Functionally, na(+)/H(+) antiporter that extrudes sodium in exchange for external protons. The chain is Na(+)/H(+) antiporter NhaA from Brucella suis (strain ATCC 23445 / NCTC 10510).